A 261-amino-acid polypeptide reads, in one-letter code: Taurine import ATP-binding protein TauB (261 aa).

The ABC transporter domain maps to 4-233 (LQLEGIGAHY…RYSAGESARA (230 aa)). 38-45 (GPSGSGKT) provides a ligand contact to ATP.

Belongs to the ABC transporter superfamily. Taurine importer (TC 3.A.1.17.1) family. In terms of assembly, the complex is composed of two ATP-binding proteins (TauB), two transmembrane proteins (TauC) and a solute-binding protein (TauA).

Its subcellular location is the cell inner membrane. It carries out the reaction taurine(out) + ATP + H2O = taurine(in) + ADP + phosphate + H(+). Part of the ABC transporter complex TauABC involved in taurine import. Responsible for energy coupling to the transport system. The polypeptide is Taurine import ATP-binding protein TauB (Pseudomonas syringae pv. tomato (strain ATCC BAA-871 / DC3000)).